The chain runs to 558 residues: Galactoside 2-alpha-L-fucosyltransferase (558 aa).

The Cytoplasmic portion of the chain corresponds to 1 to 43 (MDQNSYRRRSSPIRTTTGGSKSVNFSELLQMKYLSSGTMKLTR). A helical; Signal-anchor for type II membrane protein membrane pass occupies residues 44-64 (TFTTCLIVFSVLVAFSMIFHQ). At 65–558 (HPSDSNRIMG…EDISWGLKLV (494 aa)) the chain is on the lumenal side. N-linked (GlcNAc...) asparagine glycans are attached at residues Asn88 and Asn504.

This sequence belongs to the glycosyltransferase 37 family. In terms of assembly, homodimer. Interacts with MUR3, XLT2, XXT2 and XXT5. In terms of tissue distribution, expressed in roots, stems, leaves, flowers, siliques and seedlings.

It localises to the golgi apparatus. Its subcellular location is the golgi stack membrane. It is found in the golgi apparatus membrane. In terms of biological role, involved in cell wall biosynthesis. Is both necessary and sufficient for the addition of the terminal fucosyl residue on xyloglucan side chains, but is not involved in the fucosylation of other cell wall components. Associates with other xyloglucan-synthesizing enzymes to form multiprotein complexes for xyloglucan synthesis in the Golgi. This chain is Galactoside 2-alpha-L-fucosyltransferase (FUT1), found in Arabidopsis thaliana (Mouse-ear cress).